Reading from the N-terminus, the 437-residue chain is ATP-dependent protease ATPase subunit HslU (437 aa).

ATP-binding positions include valine 18, 60-65, aspartate 250, glutamate 315, and arginine 387; that span reads GCGKTE.

It belongs to the ClpX chaperone family. HslU subfamily. In terms of assembly, a double ring-shaped homohexamer of HslV is capped on each side by a ring-shaped HslU homohexamer. The assembly of the HslU/HslV complex is dependent on binding of ATP.

It localises to the cytoplasm. Functionally, ATPase subunit of a proteasome-like degradation complex; this subunit has chaperone activity. The binding of ATP and its subsequent hydrolysis by HslU are essential for unfolding of protein substrates subsequently hydrolyzed by HslV. HslU recognizes the N-terminal part of its protein substrates and unfolds these before they are guided to HslV for hydrolysis. In Methylobacterium radiotolerans (strain ATCC 27329 / DSM 1819 / JCM 2831 / NBRC 15690 / NCIMB 10815 / 0-1), this protein is ATP-dependent protease ATPase subunit HslU.